Consider the following 24-residue polypeptide: Lycosin-I (24 aa).

The protein belongs to the cationic peptide 04 (cupiennin) family. 05 subfamily. Monomer in solution. Small size oligomers on the lipid membranes.

It is found in the secreted. Its subcellular location is the target cell membrane. Its function is as follows. Antimicrobial peptide that inhibits many reference strains of bacteria and fungi. Is potent against Candida species and multidrug-resistant Acinetobacter baumannii (MDRAB). Is probably localized in the cytoplasm after being transported through the cell wall and membrane. Is able to interact with cell membranes and enter into cell plasma to activate the mitochondrial death pathway to sensitize cancer cells for apoptosis, as well as up-regulates p27 to inhibit cell proliferation. It shows very low effect on normal cells, such as erythrocytes, Hek293t cells. It also potently inhibits tumor cell growth in vitro, and suppresses various tumor growth in vivo when tested in human cancer xenograft models. It interacts with the cell membrane and is then internalized into the cytoplasm of cancer cells to initiate the programmable cell death. In addition, this peptide has the therapeutic effects of anti-hypertension by endothelium-dependent vasodilatation via the NO/sGC/cGMP signaling pathway. In vivo, this peptide also shows a significant ability to inhibit T.gondii invasion and proliferation, making it a potential alternative agent for the treatment of toxoplasmosis. In Lycosa singoriensis (Wolf spider), this protein is Lycosin-I.